The chain runs to 210 residues: uncharacterized protein (210 aa).

The next 5 membrane-spanning stretches (helical) occupy residues 42-62 (ITLG…VLFV), 66-86 (ALHG…GFLM), 126-146 (VVVY…EMWQ), 147-167 (IILA…VISL), and 189-209 (AGIV…NEII).

This sequence belongs to the Rht family.

The protein localises to the cell membrane. This is an uncharacterized protein from Haemophilus influenzae (strain ATCC 51907 / DSM 11121 / KW20 / Rd).